A 105-amino-acid chain; its full sequence is Thioredoxin (105 aa).

The Thioredoxin domain occupies 1–105 (MANNVMDSSF…SLLDWINKSI (105 aa)). A disulfide bond links Cys30 and Cys33.

It belongs to the thioredoxin family.

Functionally, component of the thioredoxin-thioredoxin reductase system. Participates in various redox reactions through the reversible oxidation of its active center dithiol to a disulfide and catalyzes dithiol-disulfide exchange reactions. The polypeptide is Thioredoxin (trxA) (Rickettsia conorii (strain ATCC VR-613 / Malish 7)).